The sequence spans 222 residues: Protein-L-isoaspartate O-methyltransferase (222 aa).

The active site involves Ser72.

Belongs to the methyltransferase superfamily. L-isoaspartyl/D-aspartyl protein methyltransferase family.

The protein resides in the cytoplasm. It carries out the reaction [protein]-L-isoaspartate + S-adenosyl-L-methionine = [protein]-L-isoaspartate alpha-methyl ester + S-adenosyl-L-homocysteine. In terms of biological role, catalyzes the methyl esterification of L-isoaspartyl residues in peptides and proteins that result from spontaneous decomposition of normal L-aspartyl and L-asparaginyl residues. It plays a role in the repair and/or degradation of damaged proteins. This chain is Protein-L-isoaspartate O-methyltransferase, found in Picosynechococcus sp. (strain ATCC 27264 / PCC 7002 / PR-6) (Agmenellum quadruplicatum).